Reading from the N-terminus, the 356-residue chain is Holliday junction branch migration complex subunit RuvB (356 aa).

The interval 4 to 190 (TDKLAAERII…FGIVARLEFY (187 aa)) is large ATPase domain (RuvB-L). Residues Leu29, Arg30, Gly71, Lys74, Thr75, Thr76, 137–139 (EDY), Arg180, Tyr190, and Arg227 each bind ATP. Thr75 contacts Mg(2+). The segment at 191–261 (DAEQLSRIVR…VADAALAMLD (71 aa)) is small ATPAse domain (RuvB-S). The tract at residues 264–356 (PVGFDLMDRK…NLWDTPDAEC (93 aa)) is head domain (RuvB-H). Positions 300, 319, and 324 each coordinate DNA.

The protein belongs to the RuvB family. As to quaternary structure, homohexamer. Forms an RuvA(8)-RuvB(12)-Holliday junction (HJ) complex. HJ DNA is sandwiched between 2 RuvA tetramers; dsDNA enters through RuvA and exits via RuvB. An RuvB hexamer assembles on each DNA strand where it exits the tetramer. Each RuvB hexamer is contacted by two RuvA subunits (via domain III) on 2 adjacent RuvB subunits; this complex drives branch migration. In the full resolvosome a probable DNA-RuvA(4)-RuvB(12)-RuvC(2) complex forms which resolves the HJ.

The protein localises to the cytoplasm. The enzyme catalyses ATP + H2O = ADP + phosphate + H(+). Functionally, the RuvA-RuvB-RuvC complex processes Holliday junction (HJ) DNA during genetic recombination and DNA repair, while the RuvA-RuvB complex plays an important role in the rescue of blocked DNA replication forks via replication fork reversal (RFR). RuvA specifically binds to HJ cruciform DNA, conferring on it an open structure. The RuvB hexamer acts as an ATP-dependent pump, pulling dsDNA into and through the RuvAB complex. RuvB forms 2 homohexamers on either side of HJ DNA bound by 1 or 2 RuvA tetramers; 4 subunits per hexamer contact DNA at a time. Coordinated motions by a converter formed by DNA-disengaged RuvB subunits stimulates ATP hydrolysis and nucleotide exchange. Immobilization of the converter enables RuvB to convert the ATP-contained energy into a lever motion, pulling 2 nucleotides of DNA out of the RuvA tetramer per ATP hydrolyzed, thus driving DNA branch migration. The RuvB motors rotate together with the DNA substrate, which together with the progressing nucleotide cycle form the mechanistic basis for DNA recombination by continuous HJ branch migration. Branch migration allows RuvC to scan DNA until it finds its consensus sequence, where it cleaves and resolves cruciform DNA. This chain is Holliday junction branch migration complex subunit RuvB, found in Burkholderia pseudomallei (strain 668).